Here is a 122-residue protein sequence, read N- to C-terminus: Small ribosomal subunit protein uS13 (122 aa).

A disordered region spans residues 95 to 122 (GLPVRGQKTKTNARTRKGPKRTVANKKK).

This sequence belongs to the universal ribosomal protein uS13 family. Part of the 30S ribosomal subunit. Forms a loose heterodimer with protein S19. Forms two bridges to the 50S subunit in the 70S ribosome.

In terms of biological role, located at the top of the head of the 30S subunit, it contacts several helices of the 16S rRNA. In the 70S ribosome it contacts the 23S rRNA (bridge B1a) and protein L5 of the 50S subunit (bridge B1b), connecting the 2 subunits; these bridges are implicated in subunit movement. Contacts the tRNAs in the A and P-sites. The polypeptide is Small ribosomal subunit protein uS13 (Lachnoclostridium phytofermentans (strain ATCC 700394 / DSM 18823 / ISDg) (Clostridium phytofermentans)).